Reading from the N-terminus, the 244-residue chain is Putative ABC transporter ATP-binding protein gll0289 (244 aa).

Positions 5 to 237 constitute an ABC transporter domain; that stretch reads LVVEELHYSY…RVLLETHGLE (233 aa). Position 38-45 (38-45) interacts with ATP; sequence GPNGSGKS.

The protein belongs to the ABC transporter superfamily.

Its subcellular location is the cell inner membrane. Probably part of an ABC transporter complex. Responsible for energy coupling to the transport system. The sequence is that of Putative ABC transporter ATP-binding protein gll0289 from Gloeobacter violaceus (strain ATCC 29082 / PCC 7421).